Consider the following 420-residue polypeptide: 3-isopropylmalate dehydratase large subunit (420 aa).

C300, C360, and C363 together coordinate [4Fe-4S] cluster.

The protein belongs to the aconitase/IPM isomerase family. LeuC type 2 subfamily. As to quaternary structure, heterodimer of LeuC and LeuD. The cofactor is [4Fe-4S] cluster.

The enzyme catalyses (2R,3S)-3-isopropylmalate = (2S)-2-isopropylmalate. It participates in amino-acid biosynthesis; L-leucine biosynthesis; L-leucine from 3-methyl-2-oxobutanoate: step 2/4. Its function is as follows. Catalyzes the isomerization between 2-isopropylmalate and 3-isopropylmalate, via the formation of 2-isopropylmaleate. This Halothermothrix orenii (strain H 168 / OCM 544 / DSM 9562) protein is 3-isopropylmalate dehydratase large subunit.